A 213-amino-acid chain; its full sequence is 3,4-dihydroxy-2-butanone 4-phosphate synthase (213 aa).

D-ribulose 5-phosphate-binding positions include 37–38 (RE), Asp-42, 150–154 (RSGHT), and Glu-174. Mg(2+) is bound at residue Glu-38. His-153 provides a ligand contact to Mg(2+).

It belongs to the DHBP synthase family. As to quaternary structure, homodimer. Mg(2+) serves as cofactor. Mn(2+) is required as a cofactor.

It carries out the reaction D-ribulose 5-phosphate = (2S)-2-hydroxy-3-oxobutyl phosphate + formate + H(+). The protein operates within cofactor biosynthesis; riboflavin biosynthesis; 2-hydroxy-3-oxobutyl phosphate from D-ribulose 5-phosphate: step 1/1. In terms of biological role, catalyzes the conversion of D-ribulose 5-phosphate to formate and 3,4-dihydroxy-2-butanone 4-phosphate. This is 3,4-dihydroxy-2-butanone 4-phosphate synthase from Blochmanniella floridana.